We begin with the raw amino-acid sequence, 206 residues long: MLTLLRLDSSPLETSVSRALTDEFVAAWKAAHPDGVVIVRDLTLAPPPPVDAVWIGACFTPPPQRTAEQNDRLALSDAFLEELERADEYAIGVAMHNFSIPAVLKLWIDQVVRVGRTFAYSDGRPQGLLQGKKATILAATGGVYSAGTPAEGMNFLDPYLKTVLGFLGVRDIQVVTAGGTSQLRNPDVDREAFLEPVLQRVRETAA.

FMN is bound by residues S10 and 15-17; that span reads SVS.

The protein belongs to the azoreductase type 1 family. In terms of assembly, homodimer. Requires FMN as cofactor.

It catalyses the reaction 2 a quinone + NADH + H(+) = 2 a 1,4-benzosemiquinone + NAD(+). It carries out the reaction N,N-dimethyl-1,4-phenylenediamine + anthranilate + 2 NAD(+) = 2-(4-dimethylaminophenyl)diazenylbenzoate + 2 NADH + 2 H(+). Quinone reductase that provides resistance to thiol-specific stress caused by electrophilic quinones. Its function is as follows. Also exhibits azoreductase activity. Catalyzes the reductive cleavage of the azo bond in aromatic azo compounds to the corresponding amines. This Acidobacterium capsulatum (strain ATCC 51196 / DSM 11244 / BCRC 80197 / JCM 7670 / NBRC 15755 / NCIMB 13165 / 161) protein is FMN-dependent NADH:quinone oxidoreductase.